Reading from the N-terminus, the 216-residue chain is FMN-dependent NADH:quinone oxidoreductase 2 (216 aa).

Residues Ser-9, 15–17 (SVS), 96–99 (MYNF), and 140–143 (SRGG) contribute to the FMN site.

It belongs to the azoreductase type 1 family. As to quaternary structure, homodimer. Requires FMN as cofactor.

The catalysed reaction is 2 a quinone + NADH + H(+) = 2 a 1,4-benzosemiquinone + NAD(+). It carries out the reaction N,N-dimethyl-1,4-phenylenediamine + anthranilate + 2 NAD(+) = 2-(4-dimethylaminophenyl)diazenylbenzoate + 2 NADH + 2 H(+). Functionally, quinone reductase that provides resistance to thiol-specific stress caused by electrophilic quinones. Its function is as follows. Also exhibits azoreductase activity. Catalyzes the reductive cleavage of the azo bond in aromatic azo compounds to the corresponding amines. This chain is FMN-dependent NADH:quinone oxidoreductase 2, found in Xanthomonas axonopodis pv. citri (strain 306).